Consider the following 179-residue polypeptide: Large ribosomal subunit protein uL5 (179 aa).

This sequence belongs to the universal ribosomal protein uL5 family. Part of the 50S ribosomal subunit; part of the 5S rRNA/L5/L18/L25 subcomplex. Contacts the 5S rRNA and the P site tRNA. Forms a bridge to the 30S subunit in the 70S ribosome.

This is one of the proteins that bind and probably mediate the attachment of the 5S RNA into the large ribosomal subunit, where it forms part of the central protuberance. In the 70S ribosome it contacts protein S13 of the 30S subunit (bridge B1b), connecting the 2 subunits; this bridge is implicated in subunit movement. Contacts the P site tRNA; the 5S rRNA and some of its associated proteins might help stabilize positioning of ribosome-bound tRNAs. The sequence is that of Large ribosomal subunit protein uL5 from Shewanella loihica (strain ATCC BAA-1088 / PV-4).